We begin with the raw amino-acid sequence, 258 residues long: MLDSVASTLQLSELLSLTKAEQSIRLAEINVELEMLSAQERVAWALQNLEGAHAVSSSFGIQAAVMLHLVSKQQADIPVILTDTGYLFPETYQFIDELTKSLNLNLKVYRANESANWQEARYGKLWEQGIEGIEKYNKLNKVEPMRRALNELNVKTWFSGLRREQSQSRAGLPILSIQNGVFKFLPVVDWSNKDVHYYLKEHGLSYHPLWEQGYLSVGDTHTTQKWEPGMSEEETRFFGLKRECGLHEEDNEQDGSGI.

The Nucleophile; cysteine thiosulfonate intermediate role is filled by Cys244.

It belongs to the PAPS reductase family. CysH subfamily.

It is found in the cytoplasm. It catalyses the reaction [thioredoxin]-disulfide + sulfite + adenosine 3',5'-bisphosphate + 2 H(+) = [thioredoxin]-dithiol + 3'-phosphoadenylyl sulfate. Its pathway is sulfur metabolism; hydrogen sulfide biosynthesis; sulfite from sulfate: step 3/3. Catalyzes the formation of sulfite from phosphoadenosine 5'-phosphosulfate (PAPS) using thioredoxin as an electron donor. The chain is Phosphoadenosine 5'-phosphosulfate reductase from Vibrio vulnificus (strain CMCP6).